A 385-amino-acid polypeptide reads, in one-letter code: S-adenosylmethionine synthase (385 aa).

Residue H15 coordinates ATP. D17 contacts Mg(2+). E43 provides a ligand contact to K(+). Positions 56 and 99 each coordinate L-methionine. The interval Q99–R109 is flexible loop. ATP contacts are provided by residues D164–K166, R230–F231, D239, R245–K246, A262, and K266. D239 contributes to the L-methionine binding site. K270 serves as a coordination point for L-methionine.

This sequence belongs to the AdoMet synthase family. In terms of assembly, homotetramer; dimer of dimers. It depends on Mg(2+) as a cofactor. K(+) is required as a cofactor.

It localises to the cytoplasm. It catalyses the reaction L-methionine + ATP + H2O = S-adenosyl-L-methionine + phosphate + diphosphate. Its pathway is amino-acid biosynthesis; S-adenosyl-L-methionine biosynthesis; S-adenosyl-L-methionine from L-methionine: step 1/1. Functionally, catalyzes the formation of S-adenosylmethionine (AdoMet) from methionine and ATP. The overall synthetic reaction is composed of two sequential steps, AdoMet formation and the subsequent tripolyphosphate hydrolysis which occurs prior to release of AdoMet from the enzyme. This Hamiltonella defensa subsp. Acyrthosiphon pisum (strain 5AT) protein is S-adenosylmethionine synthase.